Here is a 140-residue protein sequence, read N- to C-terminus: Large ribosomal subunit protein uL11 (140 aa).

It belongs to the universal ribosomal protein uL11 family. As to quaternary structure, part of the ribosomal stalk of the 50S ribosomal subunit. Interacts with L10 and the large rRNA to form the base of the stalk. L10 forms an elongated spine to which L12 dimers bind in a sequential fashion forming a multimeric L10(L12)X complex. Post-translationally, one or more lysine residues are methylated.

Functionally, forms part of the ribosomal stalk which helps the ribosome interact with GTP-bound translation factors. The polypeptide is Large ribosomal subunit protein uL11 (Dehalococcoides mccartyi (strain ATCC BAA-2100 / JCM 16839 / KCTC 5957 / BAV1)).